A 218-amino-acid chain; its full sequence is Peroxynitrite isomerase 2 (218 aa).

Residues 1-24 (MTPAGDTPERGSGDRAVAEAAERA) are disordered. Positions 7 to 24 (TPERGSGDRAVAEAAERA) are enriched in basic and acidic residues. The GXWXGXG motif lies at 65–71 (GVWRGEG). Heme b contacts are provided by Lys181 and His208.

The protein belongs to the nitrobindin family. As to quaternary structure, homodimer. Requires heme b as cofactor.

It carries out the reaction peroxynitrite = nitrate. The protein operates within nitrogen metabolism. Heme-binding protein able to scavenge peroxynitrite and to protect free L-tyrosine against peroxynitrite-mediated nitration, by acting as a peroxynitrite isomerase that converts peroxynitrite to nitrate. Therefore, this protein likely plays a role in peroxynitrite sensing and in the detoxification of reactive nitrogen and oxygen species (RNS and ROS, respectively). Is able to bind nitric oxide (NO) in vitro, but may act as a sensor of peroxynitrite levels in vivo. In Mycolicibacterium smegmatis (strain ATCC 700084 / mc(2)155) (Mycobacterium smegmatis), this protein is Peroxynitrite isomerase 2.